The chain runs to 344 residues: Phenylalanine--tRNA ligase alpha subunit (344 aa).

E269 provides a ligand contact to Mg(2+).

Belongs to the class-II aminoacyl-tRNA synthetase family. Phe-tRNA synthetase alpha subunit type 1 subfamily. Tetramer of two alpha and two beta subunits. Requires Mg(2+) as cofactor.

The protein localises to the cytoplasm. It catalyses the reaction tRNA(Phe) + L-phenylalanine + ATP = L-phenylalanyl-tRNA(Phe) + AMP + diphosphate + H(+). The chain is Phenylalanine--tRNA ligase alpha subunit from Ralstonia pickettii (strain 12J).